The chain runs to 247 residues: Uridylate kinase (247 aa).

An ATP-binding site is contributed by 18–21 (KLSG). Residue Gly60 coordinates UMP. Gly61 and Arg65 together coordinate ATP. Residues Asp80 and 141 to 148 (TGNPFFTT) contribute to the UMP site. Residues Thr168, Tyr174, and Asp177 each coordinate ATP.

Belongs to the UMP kinase family. Homohexamer.

Its subcellular location is the cytoplasm. The catalysed reaction is UMP + ATP = UDP + ADP. It functions in the pathway pyrimidine metabolism; CTP biosynthesis via de novo pathway; UDP from UMP (UMPK route): step 1/1. Inhibited by UTP. In terms of biological role, catalyzes the reversible phosphorylation of UMP to UDP. This Pseudomonas putida (strain ATCC 47054 / DSM 6125 / CFBP 8728 / NCIMB 11950 / KT2440) protein is Uridylate kinase.